We begin with the raw amino-acid sequence, 227 residues long: Cytidylate kinase (227 aa).

Residue 7-15 participates in ATP binding; sequence GPAGSGKST.

It belongs to the cytidylate kinase family. Type 1 subfamily.

The protein localises to the cytoplasm. The catalysed reaction is CMP + ATP = CDP + ADP. The enzyme catalyses dCMP + ATP = dCDP + ADP. This chain is Cytidylate kinase, found in Salinibacter ruber (strain DSM 13855 / M31).